Reading from the N-terminus, the 561-residue chain is 3-hydroxy-3-methylglutaryl-coenzyme A reductase 3 (561 aa).

2 consecutive transmembrane segments (helical) span residues 25–45 (PIRH…AYLM) and 69–89 (IFGL…AFVQ). Residues 90-145 (SIVSSSDDEEEDFLVGPARGSSAAAAVAPPPPPSSPAQCSLLGSPHDDAARERMPE) form a linker region. The interval 113 to 146 (AAAVAPPPPPSSPAQCSLLGSPHDDAARERMPEE) is disordered. The segment covering 134-143 (PHDDAARERM) has biased composition (basic and acidic residues). Residues 146-561 (EDEEIVSSVV…SSKDMSKVIS (416 aa)) form a catalytic region. The Charge relay system role is filled by glutamate 240. N-linked (GlcNAc...) asparagine glycosylation occurs at asparagine 304. Catalysis depends on charge relay system residues lysine 372 and aspartate 448. Histidine 546 functions as the Proton donor in the catalytic mechanism. Asparagine 550 is a glycosylation site (N-linked (GlcNAc...) asparagine).

The protein belongs to the HMG-CoA reductase family.

Its subcellular location is the endoplasmic reticulum membrane. It catalyses the reaction (R)-mevalonate + 2 NADP(+) + CoA = (3S)-3-hydroxy-3-methylglutaryl-CoA + 2 NADPH + 2 H(+). It participates in metabolic intermediate biosynthesis; (R)-mevalonate biosynthesis; (R)-mevalonate from acetyl-CoA: step 3/3. Catalyzes the synthesis of mevalonate. The specific precursor of all isoprenoid compounds present in plants. The polypeptide is 3-hydroxy-3-methylglutaryl-coenzyme A reductase 3 (HMG3) (Oryza sativa subsp. japonica (Rice)).